The chain runs to 71 residues: Cruzioseptin-2 (71 aa).

The first 22 residues, 1–22 (MAFLKKSLFLVLFLGLVSLSIC), serve as a signal peptide directing secretion. Residues 23 to 43 (EEEKREEENEEVQEDDDQSEE) constitute a propeptide that is removed on maturation. The residue at position 68 (Gln-68) is a Glutamine amide. A propeptide spanning residues 70–71 (EQ) is cleaved from the precursor.

Expressed by the skin glands.

It localises to the secreted. In terms of biological role, has antimicrobial activity against Gram-negative bacterium E.coli (MIC=26.35 uM), against Gram-positive bacterium S.aureus (MIC=6.59 uM) and against fungus C.albicans (MIC=13.18 uM). At higher concentrations also has a bactericidal and fungicidal effect. Has hemagglutinating activity against horse erythrocytes. In Cruziohyla calcarifer (Splendid leaf frog), this protein is Cruzioseptin-2.